Reading from the N-terminus, the 119-residue chain is Protein Wnt-4 (119 aa).

Serine 1 carries the O-palmitoleoyl serine; by PORCN lipid modification. 2 cysteine pairs are disulfide-bonded: cysteine 69/cysteine 100 and cysteine 85/cysteine 95. An N-linked (GlcNAc...) asparagine glycan is attached at asparagine 86.

Belongs to the Wnt family. Post-translationally, palmitoleoylation is required for efficient binding to frizzled receptors. Depalmitoleoylation leads to Wnt signaling pathway inhibition.

It localises to the secreted. It is found in the extracellular space. The protein resides in the extracellular matrix. In terms of biological role, ligand for members of the frizzled family of seven transmembrane receptors. Plays an important role in embryonic development. This is Protein Wnt-4 (WNT-4) from Plethodon jordani (Red-cheeked salamander).